Consider the following 229-residue polypeptide: GTP cyclohydrolase 1 (229 aa).

A disordered region spans residues 1–21 (MTLAKPGSGSQSRMDDKAHFK). Positions 116, 119, and 187 each coordinate Zn(2+).

This sequence belongs to the GTP cyclohydrolase I family. As to quaternary structure, toroid-shaped homodecamer, composed of two pentamers of five dimers.

It carries out the reaction GTP + H2O = 7,8-dihydroneopterin 3'-triphosphate + formate + H(+). It participates in cofactor biosynthesis; 7,8-dihydroneopterin triphosphate biosynthesis; 7,8-dihydroneopterin triphosphate from GTP: step 1/1. The chain is GTP cyclohydrolase 1 from Synechococcus sp. (strain JA-2-3B'a(2-13)) (Cyanobacteria bacterium Yellowstone B-Prime).